A 37-amino-acid chain; its full sequence is Large ribosomal subunit protein bL36 (37 aa).

Belongs to the bacterial ribosomal protein bL36 family.

The polypeptide is Large ribosomal subunit protein bL36 (Nitratidesulfovibrio vulgaris (strain ATCC 29579 / DSM 644 / CCUG 34227 / NCIMB 8303 / VKM B-1760 / Hildenborough) (Desulfovibrio vulgaris)).